Consider the following 259-residue polypeptide: uncharacterized protein (259 aa).

This sequence to M.thermoautotrophicum MTH738.

This is an uncharacterized protein from Methanocaldococcus jannaschii (strain ATCC 43067 / DSM 2661 / JAL-1 / JCM 10045 / NBRC 100440) (Methanococcus jannaschii).